The following is a 223-amino-acid chain: UPF0441 protein YgiB (223 aa).

Residues 178 to 195 (TVPKTAMAPKPATTTTVT) are compositionally biased toward low complexity. The segment at 178-223 (TVPKTAMAPKPATTTTVTRGGFGESVAKQSTMQRSAAGTSTRSMGG) is disordered. The span at 204-223 (AKQSTMQRSAAGTSTRSMGG) shows a compositional bias: polar residues.

This sequence belongs to the UPF0441 family.

The polypeptide is UPF0441 protein YgiB (Salmonella paratyphi B (strain ATCC BAA-1250 / SPB7)).